The following is a 517-amino-acid chain: Tyrosine-protein kinase Fgr (517 aa).

A lipid anchor (N-myristoyl glycine) is attached at Gly-2. Residues Cys-3 and Cys-6 are each lipidated (S-palmitoyl cysteine). The span at 17 to 33 (VGLEGDFRSQGAEERYY) shows a compositional bias: basic and acidic residues. The segment at 17 to 46 (VGLEGDFRSQGAEERYYPDPTQGRSSSISP) is disordered. Tyr-32 carries the phosphotyrosine modification. At Ser-50 the chain carries Phosphoserine. Positions 65-126 (TGVTIFVALY…PSNYVAPVDS (62 aa)) constitute an SH3 domain. Positions 132–229 (WYFGKISRKD…GLCYLLTAPC (98 aa)) constitute an SH2 domain. The residue at position 196 (Tyr-196) is a Phosphotyrosine. Ser-206 carries the post-translational modification Phosphoserine. A Protein kinase domain is found at 251–504 (IALDRRLGTG…YLQSFLEDYF (254 aa)). ATP is bound by residues 257 to 265 (LGTGCFGDV) and Lys-279. Catalysis depends on Asp-370, which acts as the Proton acceptor. The residue at position 400 (Tyr-400) is a Phosphotyrosine; by autocatalysis. Tyr-511 carries the phosphotyrosine; by SRC modification.

This sequence belongs to the protein kinase superfamily. Tyr protein kinase family. SRC subfamily. As to quaternary structure, interacts with ITGB1, ITGB2, MS4A2/FCER1B and FCGR2. Interacts (via SH2 domain) with SYK (tyrosine phosphorylated). Interacts (via SH2 domain) with FLT3 (tyrosine phosphorylated). Interacts with PTK2/FAK1. Interacts (via SH2 domain) with HCLS1 (tyrosine phosphorylated by SYK). Interacts with SIRPA and PTPNS1. Interacts (not phosphorylated on tyrosine residues) with CBL; FGR tyrosine phosphorylation promotes dissociation. Interacts with CLNK. In terms of processing, ubiquitinated. Becomes ubiquitinated in response to ITGB2 signaling; this does not lead to degradation. Post-translationally, phosphorylated. Autophosphorylated on tyrosine residues. Becomes phosphorylated in response to FCGR2 engagement, cell adhesion and signaling by ITGB2. Prior phosphorylation at Tyr-511 by SRC inhibits ulterior autophosphorylation at Tyr-400. As to expression, detected in brain cortex (at protein level).

Its subcellular location is the cell membrane. It localises to the cell projection. The protein resides in the ruffle membrane. The protein localises to the cytoplasm. It is found in the cytosol. Its subcellular location is the cytoskeleton. It localises to the mitochondrion inner membrane. The protein resides in the mitochondrion intermembrane space. It catalyses the reaction L-tyrosyl-[protein] + ATP = O-phospho-L-tyrosyl-[protein] + ADP + H(+). Activated by autophosphorylation. Prior phosphorylation at Tyr-511 by SRC inhibits ulterior autophosphorylation at Tyr-400. Activated by phorbol myristate acetate, phosphatidic acid and poly-Lys. Binding (via SH2 domain) of HCLS1 that is already phosphorylated by SYK strongly increases kinase activity. Functionally, non-receptor tyrosine-protein kinase that transmits signals from cell surface receptors devoid of kinase activity and contributes to the regulation of immune responses, including neutrophil, monocyte, macrophage and mast cell functions, cytoskeleton remodeling in response to extracellular stimuli, phagocytosis, cell adhesion and migration. Promotes mast cell degranulation, release of inflammatory cytokines and IgE-mediated anaphylaxis. Acts downstream of receptors that bind the Fc region of immunoglobulins, such as MS4A2/FCER1B, FCER1G and FCGR2. Acts downstream of ITGB1 and ITGB2, and regulates actin cytoskeleton reorganization, cell spreading and adhesion. Depending on the context, activates or inhibits cellular responses. Functions as a negative regulator of ITGB2 signaling, phagocytosis and SYK activity in monocytes. Required for normal ITGB1 and ITGB2 signaling, normal cell spreading and adhesion in neutrophils and macrophages. Functions as a positive regulator of cell migration and regulates cytoskeleton reorganization via RAC1 activation. Phosphorylates SYK (in vitro) and promotes SYK-dependent activation of AKT1 and MAP kinase signaling. Phosphorylates PLD2 in antigen-stimulated mast cells, leading to PLD2 activation and the production of the signaling molecules lysophosphatidic acid and diacylglycerol. Promotes activation of PIK3R1. Phosphorylates FASLG, and thereby regulates its ubiquitination and subsequent internalization. Phosphorylates ABL1. Promotes phosphorylation of CBL, CTTN, PIK3R1, PTK2/FAK1, PTK2B/PYK2 and VAV2. Phosphorylates HCLS1 that has already been phosphorylated by SYK, but not unphosphorylated HCLS1. Together with CLNK, it acts as a negative regulator of natural killer cell-activating receptors and inhibits interferon-gamma production. This is Tyrosine-protein kinase Fgr (Fgr) from Rattus norvegicus (Rat).